Reading from the N-terminus, the 489-residue chain is NADH-quinone oxidoreductase subunit N (489 aa).

Transmembrane regions (helical) follow at residues 8 to 28, 35 to 55, 75 to 95, 105 to 125, 127 to 147, 159 to 179, 203 to 223, 235 to 255, 271 to 291, 303 to 323, 329 to 349, 374 to 394, 407 to 427, and 456 to 476; these read LIAM…MLSI, FTIA…LYYV, FFTA…YPWL, FYML…AHHL, SMFI…GYAF, YMLL…LLYA, VLAG…LFPF, PAPT…AVVM, MILG…ALTQ, VSHL…PILA, IYLA…AVAS, AVVM…LGFI, SLWW…FYYL, and LITL…QPLI.

Belongs to the complex I subunit 2 family. In terms of assembly, NDH-1 is composed of 13 different subunits. Subunits NuoA, H, J, K, L, M, N constitute the membrane sector of the complex.

Its subcellular location is the cell inner membrane. It carries out the reaction a quinone + NADH + 5 H(+)(in) = a quinol + NAD(+) + 4 H(+)(out). Its function is as follows. NDH-1 shuttles electrons from NADH, via FMN and iron-sulfur (Fe-S) centers, to quinones in the respiratory chain. The immediate electron acceptor for the enzyme in this species is believed to be ubiquinone. Couples the redox reaction to proton translocation (for every two electrons transferred, four hydrogen ions are translocated across the cytoplasmic membrane), and thus conserves the redox energy in a proton gradient. This Proteus mirabilis (strain HI4320) protein is NADH-quinone oxidoreductase subunit N.